The sequence spans 648 residues: Cell surface glycoprotein MUC18 (648 aa).

An N-terminal signal peptide occupies residues 1-23; it reads MGLPKLVCVFLFAACCCCRRAAG. 2 Ig-like V-type domains span residues 24–131 and 141–244; these read VPGE…HYVE and PTIQ…KEVT. The Extracellular portion of the chain corresponds to 24–563; it reads VPGEEKQPVP…LPQPESKGVV (540 aa). Disulfide bonds link Cys50/Cys118, Cys163/Cys225, Cys274/Cys322, Cys367/Cys409, and Cys454/Cys501. N-linked (GlcNAc...) asparagine glycosylation occurs at Asn58. Ig-like C2-type domains follow at residues 246 to 332, 337 to 426, and 432 to 512; these read PVFY…TTIT, PLEL…QLVS, and SPWM…SNTT. The tract at residues 281–304 is disordered; it reads QPHFTINKKDPSTGEMEEESTDEN. The N-linked (GlcNAc...) asparagine glycan is linked to Asn510. The span at 532–549 shows a compositional bias: polar residues; that stretch reads TGLSTLTVSPHTRANSTS. Residues 532 to 554 form a disordered region; sequence TGLSTLTVSPHTRANSTSTEKKL. Residues 564–584 form a helical membrane-spanning segment; the sequence is IVAVIVCTLVLAVLGAALYFF. At 585–648 the chain is on the cytoplasmic side; it reads YKKGKLPCGR…QGEKYIDLRH (64 aa). Phosphoserine occurs at positions 608 and 616. Positions 625–648 are disordered; sequence LLQGSNGDKRAPGDQGEKYIDLRH. Basic and acidic residues predominate over residues 631–648; sequence GDKRAPGDQGEKYIDLRH.

In terms of tissue distribution, detected in melanoma cell lines.

The protein resides in the membrane. In terms of biological role, plays a role in cell adhesion, and in cohesion of the endothelial monolayer at intercellular junctions in vascular tissue. Its expression may allow melanoma cells to interact with cellular elements of the vascular system, thereby enhancing hematogeneous tumor spread. Could be an adhesion molecule active in neural crest cells during embryonic development. Acts as a surface receptor that triggers tyrosine phosphorylation of FYN and PTK2/FAK1, and a transient increase in the intracellular calcium concentration. The chain is Cell surface glycoprotein MUC18 (Mcam) from Mus musculus (Mouse).